Reading from the N-terminus, the 829-residue chain is MKYDHQSIETRWQKKWEDSGIFQCDTEADKPKYYVLEMFPYPSGNIHMGHVRNYSIGDVVARFKRMQGFNVLHPMGWDAFGLPAENAAIKNGTHPAKWTFANIDNMRSQLKRLGYSYDWQREVATCTPEYYRWEQLFFLRFLEKGLVYRKKAAQNWCPKCHTVLANEQVIEGLCWRCDSAVEQKELTQWFLRITDYAEELLADLSKLENGWPERVLSMQRNWIGKSTGAEIRFALDGRDDSITVFTTRPDTIFGATFMSIAPEHPLVEELIDGKPQADDVRAFVERIRNMDRIDRQSDTLEKEGVFTGAYCVNPFTGRKMPIWVANFVLAEYGTGAVMAVPAHDQRDFEFARKYDLPMQVVIQPQGEALDPATMSAAWTEAGALVNSGAFDGLANEDAKQRIADDLETTGNGRRTINYRLRDWNISRQRYWGAPIPVIYCDACGVVPEKEENLPVVLPLDVKTHDDGRSPLPHTPAFYECTCPVCGGKARRETDTMDTFVESSWYFARYTDATNDKAPFTPDALRYWLPVDQYIGGVEHAILHLLYSRFFTKALRDCGFIELDEPFANLLTQGMVLMDGSKMSKSKGNVVDPTEMIARYGADTVRLFCLFAAPPERDFDWSESGIEGSYRFVGRVWRLVEELREHLLAVGACSSTAEDAKTPVARELRLKEHATVRKAGDDLNDRFQFNTAIAAVMELVNALYLAKDELVADESGRKVLSSAVSTVLTLLSPFTPHLSEELWALLGHTESVSTLPWPRWKEDALVRDTVTLVVQVNGKLRGKLDIPADASREEVETLALNEPNVLRYLEGVTVRKVVVIPGKLVNVVVS.

The 'HIGH' region signature appears at 40–50 (PYPSGNIHMGH). The 'KMSKS' region motif lies at 581-585 (KMSKS). ATP is bound at residue K584.

This sequence belongs to the class-I aminoacyl-tRNA synthetase family.

It is found in the cytoplasm. It catalyses the reaction tRNA(Leu) + L-leucine + ATP = L-leucyl-tRNA(Leu) + AMP + diphosphate. This chain is Leucine--tRNA ligase, found in Nitratidesulfovibrio vulgaris (strain ATCC 29579 / DSM 644 / CCUG 34227 / NCIMB 8303 / VKM B-1760 / Hildenborough) (Desulfovibrio vulgaris).